An 81-amino-acid polypeptide reads, in one-letter code: Gamma-conotoxin-like TxMEKL-0511 (81 aa).

Residues 1 to 19 form the signal peptide; the sequence is MEKLTILLLVAAVLLSIQA. The propeptide occupies 20 to 45; the sequence is LNQEKHQRAKINLLSKRKPPAERWWR. 3 cysteine pairs are disulfide-bonded: cysteine 49/cysteine 63, cysteine 56/cysteine 67, and cysteine 62/cysteine 72.

It belongs to the conotoxin O2 superfamily. As to expression, expressed by the venom duct.

The protein resides in the secreted. Gamma-conotoxins may act on voltage-gated non-specific cation pacemaker channels (HCN). The sequence is that of Gamma-conotoxin-like TxMEKL-0511 from Conus textile (Cloth-of-gold cone).